Here is an 84-residue protein sequence, read N- to C-terminus: Sulfur carrier protein TusA (84 aa).

Residue Cys-19 is the Cysteine persulfide intermediate of the active site.

Belongs to the sulfur carrier protein TusA family. In terms of assembly, interacts with IscS.

It localises to the cytoplasm. Its pathway is tRNA modification. Functionally, sulfur carrier protein involved in sulfur trafficking in the cell. Part of a sulfur-relay system required for 2-thiolation during synthesis of 2-thiouridine of the modified wobble base 5-methylaminomethyl-2-thiouridine (mnm(5)s(2)U) in tRNA. Interacts with IscS and stimulates its cysteine desulfurase activity. Accepts an activated sulfur from IscS, which is then transferred to TusD, and thus determines the direction of sulfur flow from IscS to 2-thiouridine formation. Also appears to be involved in sulfur transfer for the biosynthesis of molybdopterin. The chain is Sulfur carrier protein TusA from Sodalis glossinidius (strain morsitans).